The chain runs to 317 residues: Epidermal growth factor-like protein (317 aa).

A signal peptide spans methionine 1–alanine 23. Residues threonine 24 to tyrosine 33 are may be required for E.coli agglutination activity. EGF-like domains lie at histidine 93–isoleucine 128, valine 130–threonine 161, glycine 163–glutamine 195, alanine 208–alanine 243, lysine 245–isoleucine 280, and tyrosine 282–valine 315. 18 cysteine pairs are disulfide-bonded: cysteine 98/cysteine 107, cysteine 102/cysteine 113, cysteine 115/cysteine 127, cysteine 131/cysteine 140, cysteine 135/cysteine 145, cysteine 147/cysteine 160, cysteine 164/cysteine 174, cysteine 168/cysteine 180, cysteine 182/cysteine 194, cysteine 213/cysteine 222, cysteine 217/cysteine 228, cysteine 230/cysteine 242, cysteine 246/cysteine 255, cysteine 250/cysteine 261, cysteine 263/cysteine 279, cysteine 283/cysteine 292, cysteine 287/cysteine 298, and cysteine 300/cysteine 314.

It localises to the secreted. Binds to lipopolysaccharides (LPS) present on the cell walls of Gram-negative bacteria, behaving as a pattern recognition receptor (PRR). Induces bacterial aggregation and enhances their subsequent clearance by the innate immune response. Binds to the inner core oligosaccharides region of rough-type bacterial LPS. Displays activity against the Gram-negative bacterium E.coli. Does not display any activity against the Gram-positive bacterium S.aureus or the fungi C.albicans. The chain is Epidermal growth factor-like protein from Holotrichia diomphalia (Korean black chafer).